The following is a 63-amino-acid chain: Chromatin protein Cren7 (63 aa).

The protein belongs to the Cren7 family. Monomer. In terms of processing, methylated at multiple sites, to varying extents.

It is found in the chromosome. It localises to the cytoplasm. Functionally, a chromatin protein, binds double-stranded DNA without sequence specificity. Constrains negative DNA supercoils. The sequence is that of Chromatin protein Cren7 from Pyrobaculum calidifontis (strain DSM 21063 / JCM 11548 / VA1).